The primary structure comprises 2153 residues: Non-reducing polyketide synthase albA (2153 aa).

The interval 8–244 is N-terminal acylcarrier protein transacylase domain (SAT); that stretch reads YLFGDQTSDI…VKAPIHGPYH (237 aa). The Ketosynthase family 3 (KS3) domain maps to 375–806; that stretch reads NSKIAIIGMS…GGNTALLLED (432 aa). Residues Cys547, His682, and His724 each act as for beta-ketoacyl synthase activity in the active site. A malonyl-CoA:ACP transacylase (MAT) domain region spans residues 912-1232; the sequence is FVFTGQGAQY…LASLHLAGID (321 aa). The active-site For acyl/malonyl transferase activity is Ser1001. Positions 1286-1425 are N-terminal hotdog fold; that stretch reads HEYLTTAAQK…CTVRFFDCAA (140 aa). A PKS/mFAS DH domain is found at 1286 to 1598; the sequence is HEYLTTAAQK…FQALSRKILD (313 aa). The product template (PT) domain stretch occupies residues 1290-1603; that stretch reads TTAAQKVIET…RKILDTVLPP (314 aa). His1326 serves as the catalytic Proton acceptor; for dehydratase activity. Positions 1452–1598 are C-terminal hotdog fold; the sequence is DAHRLGRGMV…FQALSRKILD (147 aa). Asp1511 functions as the Proton donor; for dehydratase activity in the catalytic mechanism. The interval 1608–1643 is disordered; the sequence is KGPARPAASAQKAAPAAAASKSRASAPAPAKPAAKP. The span at 1610 to 1643 shows a compositional bias: low complexity; that stretch reads PARPAASAQKAAPAAAASKSRASAPAPAKPAAKP. The Carrier 1 domain maps to 1643-1720; sequence PSAPSLVKRA…DFKQFLAPMS (78 aa). Position 1680 is an O-(pantetheine 4'-phosphoryl)serine (Ser1680). Positions 1720–1765 are disordered; sequence SQGEASDGSTSDPESSSSFNGGSSTDESSAGSPVSSPPNEKVTQVE. Residues 1725-1748 are compositionally biased toward low complexity; the sequence is SDGSTSDPESSSSFNGGSSTDESS. The segment covering 1749–1765 has biased composition (polar residues); it reads AGSPVSSPPNEKVTQVE. One can recognise a Carrier 2 domain in the interval 1764 to 1841; sequence VEQHATIKEI…DVEDALGLKP (78 aa). Ser1801 is subject to O-(pantetheine 4'-phosphoryl)serine. Residues 1879–2151 are claisen cyclase domain; that stretch reads SPHPRSTSIL…ELGSFIGNAM (273 aa). Ser1969 (for Claisen cyclase activity) is an active-site residue.

It catalyses the reaction 6 malonyl-CoA + acetyl-CoA + 6 H(+) = naphtopyrone YWA1 + 6 CO2 + 7 CoA + H2O. It participates in secondary metabolite biosynthesis. Non-reducing polyketide synthase; part of the gene cluster that mediates the biosynthesis of aurasperone B, a dimeric gamma-naphthopyrone. The first step in the biosynthesis of aurasperone B is the production of gamma-naphthopyrone precursor YWA1 by the non-reducing polyketide synthase albA, via condensation of one acetyl-CoA starter unit with 6 malonyl-CoA units. YWA1 is then methylated by aunE at position C-6 to yield foncesin which is further methylated at position C-8 by aunD to produce fonsecin B. A key enzyme in the biosynthetic pathway is the cytochrome P450 monooxygenase aunB which catalyzes the oxidative dimerization of fonsecin B to aurasperone B. AunB also catalyzes the oxidative dimerization of rubrofusarin B into aurasperone A. This Aspergillus niger (strain ATCC MYA-4892 / CBS 513.88 / FGSC A1513) protein is Non-reducing polyketide synthase albA.